The primary structure comprises 242 residues: DNA repair protein RecO (242 aa).

This sequence belongs to the RecO family.

In terms of biological role, involved in DNA repair and RecF pathway recombination. This chain is DNA repair protein RecO, found in Xanthobacter autotrophicus (strain ATCC BAA-1158 / Py2).